The following is a 303-amino-acid chain: Recombination-associated protein RdgC (303 aa).

The protein belongs to the RdgC family.

The protein resides in the cytoplasm. It is found in the nucleoid. In terms of biological role, may be involved in recombination. This is Recombination-associated protein RdgC from Yersinia enterocolitica serotype O:8 / biotype 1B (strain NCTC 13174 / 8081).